Here is a 415-residue protein sequence, read N- to C-terminus: ASMFKHDHYMDNGVRYPNGDGICKQLNETKCDAGFSYDRSICEGPRYWQTISKCFIACGIGQRQSPINIVSYDAKFRQRLPKLKFKPHMEKLKTEVTNHQNRAPEFEPEDGENLYVKLNNLVDGHYKFHNLHVHNGRTRRKGSEHSVNGRFTPMEAHLVFHHDEQTHFEPTRTKLGGAFPGHNDFVVVGVFLEVGDDGFGDEPDDEECKHILKGHHPDNNENGNGDNGNNGYNGDNGNNGDNGNNGYNGDNGNNGVNGNNGYNGDNGNNGDNGNNGENGNNGENGNNGENGHKHGCRVKKAKHLSRILECAYRNDKVREFKKVGEEEGLDVHLTPEMALPPLKYRHYYTYEGSLTTPPCTESVLWVVQKCHVQVSRRVLHALRKVEGYKDGTTLRKYGTRRPTQKNKVTVYKSFK.

A glycan (N-linked (GlcNAc...) asparagine) is linked at Asn27. The 382-residue stretch at 33–414 (AGFSYDRSIC…KNKVTVYKSF (382 aa)) folds into the Alpha-carbonic anhydrase domain. Positions 132, 134, and 157 each coordinate Zn(2+). Residues 201–297 (DEPDDEECKH…GENGHKHGCR (97 aa)) are disordered. Over residues 207 to 219 (ECKHILKGHHPDN) the composition is skewed to basic and acidic residues. A compositionally biased stretch (low complexity) spans 220–289 (NENGNGDNGN…NNGENGNNGE (70 aa)). 22 consecutive repeat copies span residues 225 to 227 (GDN), 228 to 230 (GNN), 231 to 233 (GYN), 234 to 236 (GDN), 237 to 239 (GNN), 240 to 242 (GDN), 243 to 245 (GNN), 246 to 248 (GYN), 249 to 251 (GDN), 252 to 254 (GNN), 255 to 257 (GVN), 258 to 260 (GNN), 261 to 263 (GYN), 264 to 266 (GDN), 267 to 269 (GNN), 270 to 272 (GDN), 273 to 275 (GNN), 276 to 278 (GEN), 279 to 281 (GNN), 282 to 284 (GEN), 285 to 286 (GN), and 288 to 290 (GEN). Residues 225–290 (GDNGNNGYNG…NGENGNNGEN (66 aa)) are 22 X 3 AA approximate tandem repeats of G-X-N. 355 to 356 (TT) is a binding site for substrate.

It belongs to the alpha-carbonic anhydrase family. As to quaternary structure, homooligomer; disulfide-linked. May also be disulfide-linked to insoluble organic matrix. Zn(2+) serves as cofactor. As to expression, expressed in the mantle.

The protein resides in the secreted. The protein localises to the extracellular space. It is found in the extracellular matrix. It catalyses the reaction hydrogencarbonate + H(+) = CO2 + H2O. In terms of biological role, acts as a negative regulator for calcification in the shells of mollusks. May function both as a calcium concentrator and as a carbonic anhydrase required for production of carbonate ions, which are assembled to CaCO(3) at mineralization sites. Is important for shell formation in both the calcitic prismatic layer and the aragonitic nacreous layer. Shows inhibitory activity of crystal formation when present in free state but, when attached to the insoluble matrix, may regulate the form and size of aragonite crystal. In Pinctada fucata (Akoya pearl oyster), this protein is Nacrein-like protein F.